The chain runs to 589 residues: Growth factor receptor-bound protein 10 (589 aa).

Disordered regions lie at residues 1–51 (MALA…EDDV) and 77–107 (LHNG…VPRS). Ser-99 carries the post-translational modification Phosphoserine. Phosphoserine; by MTOR, MAPK1 and MAPK3 is present on Ser-145. In terms of domain architecture, Ras-associating spans 161-245 (AKQDVKVFSE…SKFLFRKNYA (85 aa)). A PH domain is found at 285-394 (CPEIQGFLHV…WMTAFRLLKY (110 aa)). Ser-413 carries the post-translational modification Phosphoserine; by MAPK1 and MAPK3; in vitro. At Ser-423 the chain carries Phosphoserine; by MTOR and PKB/AKT1. Ser-426 carries the post-translational modification Phosphoserine. Ser-471 carries the post-translational modification Phosphoserine; by MTOR, MAPK1 and MAPK3. The SH2 domain maps to 488–584 (WFHGRISREE…VLPCKLKHHC (97 aa)).

The protein belongs to the GRB7/10/14 family. In terms of assembly, interacts with ligand-activated tyrosine kinase receptors, including FGFR1, INSR, IGF1R, MET and PDGFRB in a phosphotyrosine-dependent manner through the SH2 domain. Poorly binds to the EGFR. Directly interacts with MAP3K14/NIK and is recruited to the EGFR-ERBB2 complex. Interacts with GIGYF1/PERQ1 and GIGYF2/TNRC15. When unphosphorylated, interacts with AKT1 and when phosphorylated with YWHAE/14-3-3 epsilon. Interacts with NEDD4. Interacts with LRP6, thus interfering with the binding of AXIN1 to LRP6. Binds relatively non-specifically to several phosphoinositides, including PI(5)P, PI(4,5)P2, PI(3,4)P2 and PI(3,4,5)P3, with modest affinities through the PH domain. Binds to activated NRAS. Post-translationally, phosphorylated on serine residues upon EGF, FGF and PDGF stimulation.

The protein localises to the cytoplasm. With respect to regulation, phosphorylation by mTORC1 stabilizes and activates GRB10 constituting a feedback pathway by which mTORC1 inhibits INSR-dependent signaling. Its function is as follows. Adapter protein which modulates coupling of a number of cell surface receptor kinases with specific signaling pathways. Binds to, and suppress signals from, activated receptors tyrosine kinases, including the insulin (INSR) and insulin-like growth factor (IGF1R) receptors. The inhibitory effect can be achieved by 2 mechanisms: interference with the signaling pathway and increased receptor degradation. Delays and reduces AKT1 phosphorylation in response to insulin stimulation. Blocks association between INSR and IRS1 and IRS2 and prevents insulin-stimulated IRS1 and IRS2 tyrosine phosphorylation. Recruits NEDD4 to IGF1R, leading to IGF1R ubiquitination, increased internalization and degradation by both the proteasomal and lysosomal pathways. A similar role in the mediation of ubiquitination also has been suggested with INSR. Negatively regulates Wnt signaling by interacting with LRP6 intracellular portion and interfering with the binding of AXIN1 to LRP6. Positive regulator of the KDR/VEGFR-2 signaling pathway. May inhibit NEDD4-mediated degradation of KDR/VEGFR-2. The protein is Growth factor receptor-bound protein 10 (Grb10) of Sus scrofa (Pig).